Reading from the N-terminus, the 143-residue chain is Putative 2'-deoxynucleoside 5'-phosphate N-hydrolase 1 (143 aa).

Substrate is bound by residues histidine 37, glutamate 82, and 106–108 (SAM).

This sequence belongs to the 2'-deoxynucleoside 5'-phosphate N-hydrolase 1 family. Monomer and homodimer.

It catalyses the reaction a pyrimidine 2'-deoxyribonucleoside 5'-phosphate + H2O = a pyrimidine nucleobase + 2-deoxy-D-ribose 5-phosphate. The catalysed reaction is a purine 2'-deoxyribonucleoside 5'-phosphate + H2O = a purine nucleobase + 2-deoxy-D-ribose 5-phosphate. Its function is as follows. Catalyzes the cleavage of the N-glycosidic bond of deoxyribonucleoside 5'-monophosphates to yield deoxyribose 5-phosphate and a purine or pyrimidine base. The polypeptide is Putative 2'-deoxynucleoside 5'-phosphate N-hydrolase 1 (Thermofilum pendens (strain DSM 2475 / Hrk 5)).